Reading from the N-terminus, the 1482-residue chain is Calcium-dependent protein kinase 6 (1482 aa).

2 disordered regions span residues 250 to 320 (TNNY…IRPN) and 739 to 760 (SENF…DDSN). Positions 254–264 (AHDNNQDSNSY) are enriched in polar residues. Positions 277-301 (EEDNDTGDTYADNEEDEDNRDDNDD) are enriched in acidic residues. The span at 302–318 (YSQYNQCEVESDTNQIR) shows a compositional bias: polar residues. Low complexity predominate over residues 739–748 (SENFSNNFND). Over residues 749-760 (NKQKSLKNDDSN) the composition is skewed to basic and acidic residues. 2 consecutive EF-hand domains span residues 931 to 966 (IFER…LCYN) and 972 to 1007 (VDKK…LLKQ). Positions 985, 987, 989, 991, and 996 each coordinate Ca(2+). A Protein kinase domain is found at 1043–1295 (LSFKKILGCG…AAVLLHHPWF (253 aa)). Residues 1049 to 1057 (LGCGAFGEV) and Lys-1072 contribute to the ATP site. Asp-1162 serves as the catalytic Proton acceptor. EF-hand domains follow at residues 1338-1373 (NHVK…AGVK), 1376-1406 (DINR…RWKN), 1407-1442 (IDST…NGVN), and 1468-1482 (KISF…LSTF). Residues Asp-1351, Asn-1353, Asn-1355, Ser-1357, and Glu-1362 each coordinate Ca(2+). Ca(2+) is bound by residues Asp-1420, Asp-1422, Asp-1424, Tyr-1426, and Asp-1431.

Belongs to the protein kinase superfamily. Ser/Thr protein kinase family. CDPK subfamily. Mg(2+) is required as a cofactor.

The enzyme catalyses L-seryl-[protein] + ATP = O-phospho-L-seryl-[protein] + ADP + H(+). It catalyses the reaction L-threonyl-[protein] + ATP = O-phospho-L-threonyl-[protein] + ADP + H(+). Activated by calcium. In terms of biological role, calcium-dependent protein kinase which acts as a sensor and effector of intracellular Ca(2+) levels. In sporozoites, probably involved in the secretion of the cysteine protease that cleaves circumsporozoite protein CSP, thereby exposing CSP TSR domain, which binds with high affinity to highly sulfated heparan sulfate proteoglycans (HSPGs), resulting in productive invasion of the host hepatocytes. In Plasmodium berghei (strain Anka), this protein is Calcium-dependent protein kinase 6.